The primary structure comprises 406 residues: MTFPVEKVRADFPILQREVNGLPLAYLDSAASAQKPNQVIDAESAFYRHGYAAVHRGIHTLSAQATESMENVRKQASRFINARSAEELVFVRGTTEGINLVANSWGTENIRAGDNIIISEMEHHANIVPWQMLCERKGAELRVIPLHPDGTLRLETLAALFDDRTRLLAITHVSNVLGTENPLPDMIALARQHGAKVLVDGAQAVMHHAVDVQALDCDFYVFSGHKLYGPTGIGILYVKEALLQEMPPWEGGGSMISTVSLTQGTTWAKAPWRFEAGTPNTGGIIGLGAAIDYVTSLGLDKIGDYEQMLMRYALEQLAQVPDITLYGPAQRLGVIAFNLGKHHAYDVGSFLDNYGIAVRTGHHCAMPLMAWYGVPAMCRASLAMYNTHEEVDRLVAGLTRIHRLLG.

At Lys226 the chain carries N6-(pyridoxal phosphate)lysine. Catalysis depends on Cys364, which acts as the Cysteine persulfide intermediate.

Belongs to the class-V pyridoxal-phosphate-dependent aminotransferase family. Csd subfamily. As to quaternary structure, homodimer. Interacts with SufE and the SufBCD complex composed of SufB, SufC and SufD. The interaction with SufE is required to mediate the direct transfer of the sulfur atom from the S-sulfanylcysteine. It depends on pyridoxal 5'-phosphate as a cofactor.

It is found in the cytoplasm. The enzyme catalyses (sulfur carrier)-H + L-cysteine = (sulfur carrier)-SH + L-alanine. It catalyses the reaction L-selenocysteine + AH2 = hydrogenselenide + L-alanine + A + H(+). It functions in the pathway cofactor biosynthesis; iron-sulfur cluster biosynthesis. Its function is as follows. Cysteine desulfurases mobilize the sulfur from L-cysteine to yield L-alanine, an essential step in sulfur metabolism for biosynthesis of a variety of sulfur-containing biomolecules. Component of the suf operon, which is activated and required under specific conditions such as oxidative stress and iron limitation. Acts as a potent selenocysteine lyase in vitro, that mobilizes selenium from L-selenocysteine. Selenocysteine lyase activity is however unsure in vivo. This chain is Cysteine desulfurase, found in Salmonella heidelberg (strain SL476).